The primary structure comprises 116 residues: Spexin (116 aa).

The N-terminal stretch at 1–26 (MKGFKSLVVMTLTLFLVFSFMGNCNS) is a signal peptide. Positions 27–35 (APQRLFERR) are excised as a propeptide. At Gln-49 the chain carries Glutamine amide. 2 consecutive propeptides follow at residues 50–116 (GRRF…LLNW) and 74–116 (PNSQ…LLNW). Positions 53–73 (FLSDQSRRKDLSDRPPLERRS) are enriched in basic and acidic residues. The disordered stretch occupies residues 53–80 (FLSDQSRRKDLSDRPPLERRSPNSQQLT).

Belongs to the spexin family.

It is found in the secreted. Its subcellular location is the extracellular space. It localises to the cytoplasmic vesicle. The protein localises to the secretory vesicle. Its function is as follows. Plays a role as a central modulator of cardiovascular and renal function and nociception. Also plays a role in energy metabolism and storage. Inhibits adrenocortical cell proliferation with minor stimulation on corticosteroid release. In terms of biological role, acts as a ligand for galanin receptors GALR2 and GALR3. Intracerebroventricular administration of the peptide induces an increase in arterial blood pressure, a decrease in both heart rate and renal excretion and delayed natriuresis. Intraventricular administration of the peptide induces antinociceptive activity. Also induces contraction of muscarinic-like stomach smooth muscles. Intraperitoneal administration of the peptide induces a reduction in food consumption and body weight. Inhibits long chain fatty acid uptake into adipocytes. Intracerebroventricular administration of the peptide induces a decrease in heart rate, but no change in arterial pressure, and an increase in urine flow rate. Intraventricular administration of the peptide induces antinociceptive activity. This is Spexin (SPX) from Bos taurus (Bovine).